The chain runs to 361 residues: Serine/threonine-protein kinase SRK2I (361 aa).

A Protein kinase domain is found at Tyr-22–Phe-278. ATP-binding positions include Ile-28–Ala-36 and Lys-51. Residue Asp-141 is the Proton acceptor of the active site.

This sequence belongs to the protein kinase superfamily. Ser/Thr protein kinase family. Interacts with ABI1. Interacts with I-2 and TOPP1. Interacts with FREE1 (via C-terminus). Autophosphorylated in vitro. As to expression, expressed at low levels in seeds, seedlings, roots (especially in tips), stems, leaves, shoots, flowers and siliques.

The catalysed reaction is L-seryl-[protein] + ATP = O-phospho-L-seryl-[protein] + ADP + H(+). It catalyses the reaction L-threonyl-[protein] + ATP = O-phospho-L-threonyl-[protein] + ADP + H(+). Its activity is regulated as follows. Activated by autophosphorylation of its activation loop. Functionally, together with SRK2D, key component and activator of the abscisic acid (ABA) signaling pathway that regulates numerous ABA responses, such as seed germination, Pro accumulation, root growth inhibition, dormancy and seedling growth, and, to a lesser extent, stomatal closure. In response to ABA, phosphorylates the ESCRT-I complex component FREE1, which is required for ABA-induced FREE1 nuclear import. The sequence is that of Serine/threonine-protein kinase SRK2I (SRK2I) from Arabidopsis thaliana (Mouse-ear cress).